The sequence spans 127 residues: Large ribosomal subunit protein eL8 (127 aa).

The protein belongs to the eukaryotic ribosomal protein eL8 family. Part of the 50S ribosomal subunit. Component of box C/D small ribonucleoprotein (sRNP) particles that contain rpl7ae, FlpA and nop5, plus a guide RNA. These sRNP particles form homodimers, giving rise to an asymmetric holoenzyme. Probably part of the RNase P complex.

The protein resides in the cytoplasm. Its function is as follows. Multifunctional RNA-binding protein that recognizes the K-turn motif in ribosomal RNA, the RNA component of RNase P, box H/ACA, box C/D and box C'/D' sRNAs. The polypeptide is Large ribosomal subunit protein eL8 (Saccharolobus solfataricus (strain ATCC 35092 / DSM 1617 / JCM 11322 / P2) (Sulfolobus solfataricus)).